Reading from the N-terminus, the 499-residue chain is Probable cytosol aminopeptidase (499 aa).

Residues K263 and D268 each contribute to the Mn(2+) site. The active site involves K275. 3 residues coordinate Mn(2+): D286, D345, and E347. R349 is a catalytic residue.

The protein belongs to the peptidase M17 family. The cofactor is Mn(2+).

The protein localises to the cytoplasm. The catalysed reaction is Release of an N-terminal amino acid, Xaa-|-Yaa-, in which Xaa is preferably Leu, but may be other amino acids including Pro although not Arg or Lys, and Yaa may be Pro. Amino acid amides and methyl esters are also readily hydrolyzed, but rates on arylamides are exceedingly low.. The enzyme catalyses Release of an N-terminal amino acid, preferentially leucine, but not glutamic or aspartic acids.. In terms of biological role, presumably involved in the processing and regular turnover of intracellular proteins. Catalyzes the removal of unsubstituted N-terminal amino acids from various peptides. The sequence is that of Probable cytosol aminopeptidase (pepA) from Chlamydia muridarum (strain MoPn / Nigg).